We begin with the raw amino-acid sequence, 318 residues long: Ankyrin repeat and SOCS box protein 7 (318 aa).

7 ANK repeats span residues 13-42 (QEEL…SPNG), 46-75 (NGWT…DPTV), 80-109 (GGFT…RSDI), 116-145 (DGWT…EVDP), 149-178 (KGTT…NIDI), 180-208 (NGFL…DTNL), and 213-242 (DGQT…DTNT). Residues 265 to 318 (LDFLQEVTRQPRNLQDLCRIKIRQCIGLQNLKLLDELPIAKVMKDYLKHKFDDI) enclose the SOCS box domain.

The protein belongs to the ankyrin SOCS box (ASB) family. Interacts with CUL5. Interacts with RNF7. Interacts with PSRC1.

The protein operates within protein modification; protein ubiquitination. Functionally, probable substrate-recognition component of a SCF-like ECS (Elongin-Cullin-SOCS-box protein) E3 ubiquitin-protein ligase complex which mediates the ubiquitination and subsequent proteasomal degradation of target proteins. Plays a role in spindle dynamics and genome integrity by targeting the mitotic progression protein PSRC1 for proteasomal degradation in a cell cycle-dependent manner. Also participates in meiosis by mediating the proper attachment between kinetochores and microtubules. The protein is Ankyrin repeat and SOCS box protein 7 (ASB7) of Homo sapiens (Human).